Consider the following 55-residue polypeptide: Myrmicitoxin(1)-Pr6b (55 aa).

An N-terminal signal peptide occupies residues 1–22 (MKIIYAFLLIAVVAFMGSGIMA). Positions 23 to 29 (ESLAEAI) are excised as a propeptide.

Belongs to the formicidae venom clade 4 family. Expressed by the venom gland.

The protein localises to the secreted. Its function is as follows. Probable neurotoxin. The protein is Myrmicitoxin(1)-Pr6b of Pogonomyrmex rugosus (Desert harvester ant).